Consider the following 156-residue polypeptide: ADP-ribosylation factor-like protein 2-binding protein (156 aa).

The protein belongs to the ARL2BP family.

It localises to the cytoplasm. The protein resides in the mitochondrion intermembrane space. The protein localises to the cytoskeleton. Its subcellular location is the microtubule organizing center. It is found in the centrosome. It localises to the nucleus. The protein resides in the spindle. The protein localises to the cilium basal body. In terms of biological role, plays a role as an effector of the ADP-ribosylation factor-like protein 2, ARL2. This Gallus gallus (Chicken) protein is ADP-ribosylation factor-like protein 2-binding protein (ARL2BP).